The sequence spans 676 residues: Methionine--tRNA ligase (676 aa).

Residues 15–25 (PYANGPIHLGH) carry the 'HIGH' region motif. The Zn(2+) site is built by C146, C149, C159, and C162. Positions 332 to 336 (KMSKS) match the 'KMSKS' region motif. Residue K335 coordinates ATP. The region spanning 575-676 (DFAKIDLRIA…EGAQPGMRVK (102 aa)) is the tRNA-binding domain.

This sequence belongs to the class-I aminoacyl-tRNA synthetase family. MetG type 1 subfamily. As to quaternary structure, homodimer. The cofactor is Zn(2+).

It localises to the cytoplasm. The enzyme catalyses tRNA(Met) + L-methionine + ATP = L-methionyl-tRNA(Met) + AMP + diphosphate. Its function is as follows. Is required not only for elongation of protein synthesis but also for the initiation of all mRNA translation through initiator tRNA(fMet) aminoacylation. This chain is Methionine--tRNA ligase, found in Shewanella sp. (strain MR-4).